A 763-amino-acid polypeptide reads, in one-letter code: Palmitoyltransferase AKR1 (763 aa).

Over residues 1–15 (MEDNSEQASVSSQAS) the composition is skewed to polar residues. Residues 1 to 59 (MEDNSEQASVSSQASMRPLVSDNGDREAGAGVEVNIANDNDTSVGVDGENGNEDDDPIL) are disordered. At 1-307 (MEDNSEQASV…KLVKRDDHAK (307 aa)) the chain is on the cytoplasmic side. ANK repeat units lie at residues 57-87 (PILS…NVSS), 92-121 (EGVT…NVES), 126-155 (LEAT…SATT), 159-188 (QGFN…SKGI), 197-226 (KGRT…SVKI), 230-259 (GGFT…DFFQ), and 292-322 (NGYP…GFAF). Residues 308–325 (IITFLIPLLVLGFAFFGF) form a helical membrane-spanning segment. The Lumenal portion of the chain corresponds to 326–330 (SHLHI). The helical transmembrane segment at 331–348 (LFALPVIILLLLASNKFI) threads the bilayer. The Cytoplasmic portion of the chain corresponds to 349-368 (KSFLLPSYETKGTNSASLLK). Residues 369–389 (SPLIAGILFGSIFWLAFVWIL) form a helical membrane-spanning segment. The Lumenal segment spans residues 390-401 (RILPYTFTKRPL). A helical membrane pass occupies residues 402–422 (GNLTFCAILCFVCYSLFLLAF). The Cytoplasmic portion of the chain corresponds to 423-497 (SDPGHIGSEN…YNDVGLKNHK (75 aa)). One can recognise a DHHC domain in the interval 454 to 504 (SFCLETWVRKPLRSKYSYLNDALILRFDHYCPWIYNDVGLKNHKLFIFFIL). Cysteine 484 acts as the S-palmitoyl cysteine intermediate in catalysis. Residues 498 to 518 (LFIFFILALELGIFSFVKVCL) traverse the membrane as a helical segment. Topologically, residues 519 to 546 (KYFDELDMDGDCFILGDDDLCSGLIGDR) are lumenal. The helical transmembrane segment at 547–567 (FTFLIMTWACIQAVWIFSLVI) threads the bilayer. Topologically, residues 568–763 (VQLFQITKGL…DPLSEIDDMV (196 aa)) are cytoplasmic.

This sequence belongs to the DHHC palmitoyltransferase family. AKR/ZDHHC17 subfamily.

The protein resides in the early endosome membrane. It localises to the golgi apparatus membrane. The catalysed reaction is L-cysteinyl-[protein] + hexadecanoyl-CoA = S-hexadecanoyl-L-cysteinyl-[protein] + CoA. In terms of biological role, palmitoyltransferase specific for casein kinase 1. The protein is Palmitoyltransferase AKR1 (AKR1) of Candida glabrata (strain ATCC 2001 / BCRC 20586 / JCM 3761 / NBRC 0622 / NRRL Y-65 / CBS 138) (Yeast).